Consider the following 301-residue polypeptide: Pantothenate synthetase (301 aa).

ATP is bound at residue 30-37 (MGNLHEGH). Histidine 37 serves as the catalytic Proton donor. (R)-pantoate is bound at residue glutamine 61. Position 61 (glutamine 61) interacts with beta-alanine. 149-152 (GEKD) serves as a coordination point for ATP. Glutamine 155 contributes to the (R)-pantoate binding site. Residues valine 178 and 186 to 189 (MSSR) contribute to the ATP site.

This sequence belongs to the pantothenate synthetase family. In terms of assembly, homodimer.

It localises to the cytoplasm. It carries out the reaction (R)-pantoate + beta-alanine + ATP = (R)-pantothenate + AMP + diphosphate + H(+). The protein operates within cofactor biosynthesis; (R)-pantothenate biosynthesis; (R)-pantothenate from (R)-pantoate and beta-alanine: step 1/1. Functionally, catalyzes the condensation of pantoate with beta-alanine in an ATP-dependent reaction via a pantoyl-adenylate intermediate. The polypeptide is Pantothenate synthetase (Vibrio vulnificus (strain YJ016)).